The following is a 580-amino-acid chain: NADH-ubiquinone oxidoreductase chain 5 (580 aa).

Transmembrane regions (helical) follow at residues 12–32 (FYFL…FLLM), 50–70 (IVMT…VLLI), 92–112 (ILLV…PNLI), 113–133 (SILL…IYFQ), 153–173 (VALL…YIFY), 183–203 (MMII…QIPF), 215–235 (TPVS…YLLI), 244–264 (WWMA…AGLG), 274–293 (IIAL…LSMG), 298–320 (AFFH…GSII), 343–363 (CSCF…AGFY), 367–387 (LILE…LFFF), 427–447 (ICFL…LMFL), 463–483 (LFVC…KLFF), 496–516 (FVGS…NYPL), and 560–580 (IYLL…VLVN).

The protein belongs to the complex I subunit 5 family.

The protein resides in the mitochondrion inner membrane. The catalysed reaction is a ubiquinone + NADH + 5 H(+)(in) = a ubiquinol + NAD(+) + 4 H(+)(out). Core subunit of the mitochondrial membrane respiratory chain NADH dehydrogenase (Complex I) that is believed to belong to the minimal assembly required for catalysis. Complex I functions in the transfer of electrons from NADH to the respiratory chain. The immediate electron acceptor for the enzyme is believed to be ubiquinone. The protein is NADH-ubiquinone oxidoreductase chain 5 (mt:ND5) of Anopheles gambiae (African malaria mosquito).